We begin with the raw amino-acid sequence, 1499 residues long: Multidrug resistance protein CDR2 (1499 aa).

The Cytoplasmic portion of the chain corresponds to 1–511; that stretch reads MSTANTSLSQ…NFLRMKGDPS (511 aa). The region spanning 148-402 is the ABC transporter 1 domain; the sequence is FTTEAINKLK…FENMGWKCPQ (255 aa). Helical transmembrane passes span 512 to 532, 546 to 566, 596 to 616, 621 to 641, 660 to 680, and 763 to 783; these read IPLI…SVFF, GALF…ILSL, LPVK…MVNL, GNFF…SHMF, VFLL…YILG, and FGIT…LTEF. The Cytoplasmic portion of the chain corresponds to 784–1193; sequence NKGAMQKGEI…TIVQDWRSPG (410 aa). An ABC transporter 2 domain is found at 857 to 1101; it reads FFWRDLTYQV…MINYFEKYGA (245 aa). 893–900 is an ATP binding site; the sequence is GASGAGKT. The next 6 membrane-spanning stretches (helical) occupy residues 1194–1214, 1229–1249, 1279–1299, 1315–1335, 1354–1374, and 1465–1485; these read YIYS…FSFF, AVFM…PYFV, IPFQ…PVGL, LMWM…QLAI, LCLM…FWIF, and FGIF…FYWL.

It belongs to the ABC transporter superfamily. ABCG family. PDR (TC 3.A.1.205) subfamily.

The protein localises to the membrane. Functionally, multidrug efflux transporter. Confers resistance to azole antifungal agents, to other antifungals (terbinafine, amorolfine) and to a variety of metabolic inhibitors. The sequence is that of Multidrug resistance protein CDR2 (CDR2) from Candida albicans (strain SC5314 / ATCC MYA-2876) (Yeast).